The following is a 455-amino-acid chain: MDMSFPKGFLWGAATASYQIEGAWNEDGKGESIWDRFTHQKRNILYGHNGDVACDHYHRFEEDVSLMKELGLKAYRFSIAWTRIFPDGFGTVNQKGLEFYDRLINKLVENGIEPVVTLYHWDLPQKLQDIGGWANPEIVNYYFDYAMLVINRYKDKVKKWITFNEPYCIAFLGYFHGIHAPGIKDFKVAMDVVHSLMLSHFKVVKAVKENNIDVEVGITLNLTPVYLQTERLGYKVSEIEREMVSLSSQLDNQLFLDPVLKGSYPQKLLDYLVQKDLLDSQKALSMQQEVKENFIFPDFLGINYYTRAVRLYDENSSWIFPIRWEHPAGEYTEMGWEVFPQGLFDLLIWIKESYPQIPIYITENGAAYNDIVTEDGKVHDSKRIEYLKQHFEAARKAIENGVDLRGYFVWSLMDNFEWAMGYTKRFGIIYVDYETQKRIKKDSFYFYQQYIKENS.

Glu165 functions as the Proton donor in the catalytic mechanism. Catalysis depends on Glu363, which acts as the Nucleophile.

Belongs to the glycosyl hydrolase 1 family.

It carries out the reaction Hydrolysis of terminal, non-reducing beta-D-glucosyl residues with release of beta-D-glucose.. In Caldicellulosiruptor saccharolyticus (Caldocellum saccharolyticum), this protein is Beta-glucosidase A (bglA).